Reading from the N-terminus, the 221-residue chain is MALIDPRAGLSGIAPSSPQARYILPSFIEHSSFGVKESNPYNKLFEERIIFLGVQVDDASANDIMAQLLVLESLDPDRDITMYINSPGGSFTSLMAIYDTMQYVRADVATVCLGQAASAAAVLLAAGTPGKRACLPNARVLIHQPSLEGGIQGQVSDLEIQAAEIERMRRLMETTLARHTGKDPDTIRKDTDRDKILTAEDAKEYGIIDTVFDYRKLSAQK.

Ser-118 (nucleophile) is an active-site residue. Residue His-143 is part of the active site.

The protein belongs to the peptidase S14 family. Fourteen ClpP subunits assemble into 2 heptameric rings which stack back to back to give a disk-like structure with a central cavity, resembling the structure of eukaryotic proteasomes.

The protein localises to the cytoplasm. It catalyses the reaction Hydrolysis of proteins to small peptides in the presence of ATP and magnesium. alpha-casein is the usual test substrate. In the absence of ATP, only oligopeptides shorter than five residues are hydrolyzed (such as succinyl-Leu-Tyr-|-NHMec, and Leu-Tyr-Leu-|-Tyr-Trp, in which cleavage of the -Tyr-|-Leu- and -Tyr-|-Trp bonds also occurs).. Its function is as follows. Cleaves peptides in various proteins in a process that requires ATP hydrolysis. Has a chymotrypsin-like activity. Plays a major role in the degradation of misfolded proteins. The chain is ATP-dependent Clp protease proteolytic subunit 3 from Nocardia farcinica (strain IFM 10152).